The chain runs to 494 residues: Guanosine-5'-triphosphate,3'-diphosphate pyrophosphatase (494 aa).

Belongs to the GppA/Ppx family. GppA subfamily.

The enzyme catalyses guanosine 3'-diphosphate 5'-triphosphate + H2O = guanosine 3',5'-bis(diphosphate) + phosphate + H(+). It functions in the pathway purine metabolism; ppGpp biosynthesis; ppGpp from GTP: step 2/2. Functionally, catalyzes the conversion of pppGpp to ppGpp. Guanosine pentaphosphate (pppGpp) is a cytoplasmic signaling molecule which together with ppGpp controls the 'stringent response', an adaptive process that allows bacteria to respond to amino acid starvation, resulting in the coordinated regulation of numerous cellular activities. The chain is Guanosine-5'-triphosphate,3'-diphosphate pyrophosphatase from Shigella sonnei (strain Ss046).